Here is a 165-residue protein sequence, read N- to C-terminus: MVGLSRLAGGGLLLVLALLPLALDGKPAPEALHKPPTGLRTSLAALRILGYLRPDSKQSRAARDRMLHPEQQVGGGGDSRPLQDETNKGKGSSCFGQKIDRIGSMSGMGCRTQGKPPPALPTAPAALRILEYLRPDSKRSRATRDRMLHPEQQVGGGGGGGSRVI.

Positions 1-25 (MVGLSRLAGGGLLLVLALLPLALDG) are cleaved as a signal peptide. Residues 26-83 (KPAPEALHKPPTGLRTSLAALRILGYLRPDSKQSRAARDRMLHPEQQVGGGGDSRPLQ) constitute a propeptide that is removed on maturation. Residues 56–68 (SKQSRAARDRMLH) are compositionally biased toward basic and acidic residues. Disordered regions lie at residues 56–100 (SKQS…QKID) and 135–165 (PDSK…SRVI). An intrachain disulfide couples Cys-94 to Cys-110. A propeptide spanning residues 129–165 (ILEYLRPDSKRSRATRDRMLHPEQQVGGGGGGGSRVI) is cleaved from the precursor. Residues 135–149 (PDSKRSRATRDRMLH) show a composition bias toward basic and acidic residues. Residues 154 to 165 (VGGGGGGGSRVI) are compositionally biased toward gly residues.

Belongs to the natriuretic peptide family. In terms of tissue distribution, expressed by the venom gland.

It is found in the secreted. Its function is as follows. Natriuretic peptide that dose-dependently induces the rapid relaxation of rat aortic strips phenylephrine-precontracted. Acts by stimulating cGMP production in a dose-dependent manner (by probably activating NPR1 and/or NPR2). May also show potent hypotensive effects. The chain is Natriuretic peptide Na-NP from Naja atra (Chinese cobra).